The chain runs to 211 residues: MRVLVVDHPLVAHKLTVLRDKNTPSPVFRQLTEELVTLLAYEATREVRVEEVSIETPVTKTVGTGLVKPTPLVVPILRAGLGMLEGMTRLLPTAEVGFLGMARNEETLEAITYAERLPEDLTGRQVYVLDPMLATGATLREAIKFLFARRALDITCICLLGAPEGIEALREQHEGANVTIVLASIDEGLNEKAYIVPGLGDAGDRLYGVVG.

5-phospho-alpha-D-ribose 1-diphosphate-binding positions include Arg78, Arg103, and Asp130–Thr138. Uracil contacts are provided by residues Ile195 and Gly200–Ala202. Asp201 is a binding site for 5-phospho-alpha-D-ribose 1-diphosphate.

It belongs to the UPRTase family. The cofactor is Mg(2+).

It carries out the reaction UMP + diphosphate = 5-phospho-alpha-D-ribose 1-diphosphate + uracil. It participates in pyrimidine metabolism; UMP biosynthesis via salvage pathway; UMP from uracil: step 1/1. Allosterically activated by GTP. Its function is as follows. Catalyzes the conversion of uracil and 5-phospho-alpha-D-ribose 1-diphosphate (PRPP) to UMP and diphosphate. This chain is Uracil phosphoribosyltransferase, found in Renibacterium salmoninarum (strain ATCC 33209 / DSM 20767 / JCM 11484 / NBRC 15589 / NCIMB 2235).